The chain runs to 186 residues: MVQVWYMDTEETDQRLEHHRNPPAYLELDDLYQKTGVEYFKINADEYQSDNTLTELRAKRGYTYDDEITCSEKCLPDYANKLKAFFTEHLHTDEEIRLILEGSGYFDVRDNEDNWLRIKVVKGDLIIIPAGIYHRFTLDTNNFIRTRRYFVGEPVWAPHNRPADEMDCRKSYIKHQSENFVQFNKV.

4 residues coordinate Fe(2+): H89, H91, E95, and H134. The Ni(2+) site is built by H89, H91, E95, and H134.

This sequence belongs to the acireductone dioxygenase (ARD) family. The cofactor is Fe(2+). Ni(2+) is required as a cofactor.

The protein resides in the cytoplasm. It localises to the nucleus. The enzyme catalyses 1,2-dihydroxy-5-(methylsulfanyl)pent-1-en-3-one + O2 = 4-methylsulfanyl-2-oxobutanoate + formate + 2 H(+). It carries out the reaction 1,2-dihydroxy-5-(methylsulfanyl)pent-1-en-3-one + O2 = 3-(methylsulfanyl)propanoate + CO + formate + 2 H(+). Its pathway is amino-acid biosynthesis; L-methionine biosynthesis via salvage pathway; L-methionine from S-methyl-5-thio-alpha-D-ribose 1-phosphate: step 5/6. Its function is as follows. Catalyzes 2 different reactions between oxygen and the acireductone 1,2-dihydroxy-3-keto-5-methylthiopentene (DHK-MTPene) depending upon the metal bound in the active site. Fe-containing acireductone dioxygenase (Fe-ARD) produces formate and 2-keto-4-methylthiobutyrate (KMTB), the alpha-ketoacid precursor of methionine in the methionine recycle pathway. Ni-containing acireductone dioxygenase (Ni-ARD) produces methylthiopropionate, carbon monoxide and formate, and does not lie on the methionine recycle pathway. The chain is Acireductone dioxygenase from Drosophila melanogaster (Fruit fly).